Consider the following 236-residue polypeptide: Small ribosomal subunit protein uS2c (236 aa).

Belongs to the universal ribosomal protein uS2 family.

It localises to the plastid. The protein resides in the chloroplast. The sequence is that of Small ribosomal subunit protein uS2c (rps2) from Oenothera biennis (German evening primrose).